The sequence spans 71 residues: MPVIKVRENEPFDVALRRFKRSCEKAGILSEVRRRESYEKPTWERKRKKAAAVKRAAKKVSRENARRVRMY.

Positions 49 to 59 (KAAAVKRAAKK) are enriched in basic residues. Positions 49-71 (KAAAVKRAAKKVSRENARRVRMY) are disordered. Over residues 60-71 (VSRENARRVRMY) the composition is skewed to basic and acidic residues.

It belongs to the bacterial ribosomal protein bS21 family.

The protein is Small ribosomal subunit protein bS21 of Colwellia psychrerythraea (strain 34H / ATCC BAA-681) (Vibrio psychroerythus).